The following is a 285-amino-acid chain: Acetyl-coenzyme A carboxylase carboxyl transferase subunit beta (285 aa).

Positions 22–285 (LWTKCEACGA…HPGVAYAPGV (264 aa)) constitute a CoA carboxyltransferase N-terminal domain. Residues Cys26, Cys29, Cys45, and Cys48 each contribute to the Zn(2+) site. Residues 26-48 (CEACGAQIYKKEFQENLHVCPKC) form a C4-type zinc finger.

It belongs to the AccD/PCCB family. As to quaternary structure, acetyl-CoA carboxylase is a heterohexamer composed of biotin carboxyl carrier protein (AccB), biotin carboxylase (AccC) and two subunits each of ACCase subunit alpha (AccA) and ACCase subunit beta (AccD). It depends on Zn(2+) as a cofactor.

The protein localises to the cytoplasm. It carries out the reaction N(6)-carboxybiotinyl-L-lysyl-[protein] + acetyl-CoA = N(6)-biotinyl-L-lysyl-[protein] + malonyl-CoA. It functions in the pathway lipid metabolism; malonyl-CoA biosynthesis; malonyl-CoA from acetyl-CoA: step 1/1. Its function is as follows. Component of the acetyl coenzyme A carboxylase (ACC) complex. Biotin carboxylase (BC) catalyzes the carboxylation of biotin on its carrier protein (BCCP) and then the CO(2) group is transferred by the transcarboxylase to acetyl-CoA to form malonyl-CoA. The protein is Acetyl-coenzyme A carboxylase carboxyl transferase subunit beta of Thermus thermophilus (strain ATCC BAA-163 / DSM 7039 / HB27).